Consider the following 224-residue polypeptide: Adenylate kinase (224 aa).

10–15 (GSGKST) contacts ATP. Positions 30 to 59 (SSGDLIRGEIERKSSLGLEMAAYLSRGDLI) are NMP. AMP-binding positions include Ser31, Arg36, 57–59 (DLI), 83–86 (GYPR), and Gln90. An LID region spans residues 124–161 (GRRICPNCGAVYHITYNPPKVPGICDVCGTKLIQRTDD). Position 125 (Arg125) interacts with ATP. Cys128 and Cys131 together coordinate Zn(2+). 134 to 135 (VY) lines the ATP pocket. Residues Cys148 and Cys151 each contribute to the Zn(2+) site. AMP-binding residues include Arg158 and Arg169. Gly197 is an ATP binding site.

It belongs to the adenylate kinase family. In terms of assembly, monomer.

Its subcellular location is the cytoplasm. It catalyses the reaction AMP + ATP = 2 ADP. Its pathway is purine metabolism; AMP biosynthesis via salvage pathway; AMP from ADP: step 1/1. In terms of biological role, catalyzes the reversible transfer of the terminal phosphate group between ATP and AMP. Plays an important role in cellular energy homeostasis and in adenine nucleotide metabolism. This is Adenylate kinase from Thermococcus gammatolerans (strain DSM 15229 / JCM 11827 / EJ3).